We begin with the raw amino-acid sequence, 450 residues long: Bifunctional protein GlmU (450 aa).

The pyrophosphorylase stretch occupies residues 1–229 (MRRHAIILAA…VEEIMGVNDR (229 aa)). UDP-N-acetyl-alpha-D-glucosamine contacts are provided by residues 8–11 (LAAG), Lys22, Gln72, and 77–78 (GT). Asp102 contributes to the Mg(2+) binding site. Residues Gly139, Glu154, and Asn227 each contribute to the UDP-N-acetyl-alpha-D-glucosamine site. Asn227 lines the Mg(2+) pocket. Residues 230-250 (VMLSQAENAMQRRTNHYHMLN) are linker. The segment at 251–450 (GVTIIDPDST…RQTTKEGYRK (200 aa)) is N-acetyltransferase. Positions 332 and 350 each coordinate UDP-N-acetyl-alpha-D-glucosamine. The active-site Proton acceptor is His362. UDP-N-acetyl-alpha-D-glucosamine is bound by residues Tyr365 and Asn376. Acetyl-CoA-binding positions include 385–386 (NY), Ala422, and Arg439.

It in the N-terminal section; belongs to the N-acetylglucosamine-1-phosphate uridyltransferase family. The protein in the C-terminal section; belongs to the transferase hexapeptide repeat family. In terms of assembly, homotrimer. Requires Mg(2+) as cofactor.

It localises to the cytoplasm. It carries out the reaction alpha-D-glucosamine 1-phosphate + acetyl-CoA = N-acetyl-alpha-D-glucosamine 1-phosphate + CoA + H(+). The enzyme catalyses N-acetyl-alpha-D-glucosamine 1-phosphate + UTP + H(+) = UDP-N-acetyl-alpha-D-glucosamine + diphosphate. It functions in the pathway nucleotide-sugar biosynthesis; UDP-N-acetyl-alpha-D-glucosamine biosynthesis; N-acetyl-alpha-D-glucosamine 1-phosphate from alpha-D-glucosamine 6-phosphate (route II): step 2/2. Its pathway is nucleotide-sugar biosynthesis; UDP-N-acetyl-alpha-D-glucosamine biosynthesis; UDP-N-acetyl-alpha-D-glucosamine from N-acetyl-alpha-D-glucosamine 1-phosphate: step 1/1. The protein operates within bacterial outer membrane biogenesis; LPS lipid A biosynthesis. In terms of biological role, catalyzes the last two sequential reactions in the de novo biosynthetic pathway for UDP-N-acetylglucosamine (UDP-GlcNAc). The C-terminal domain catalyzes the transfer of acetyl group from acetyl coenzyme A to glucosamine-1-phosphate (GlcN-1-P) to produce N-acetylglucosamine-1-phosphate (GlcNAc-1-P), which is converted into UDP-GlcNAc by the transfer of uridine 5-monophosphate (from uridine 5-triphosphate), a reaction catalyzed by the N-terminal domain. The polypeptide is Bifunctional protein GlmU (Staphylococcus aureus (strain MRSA252)).